The primary structure comprises 384 residues: 3,7-dimethylxanthine N-methyltransferase 1 (384 aa).

Residues Tyr18, Cys61, Asn66, Asp100, Leu101, Ser139, Phe140, and Cys156 each coordinate S-adenosyl-L-homocysteine. Residue Tyr157 coordinates theobromine. Residue Cys158 coordinates S-adenosyl-L-homocysteine. His160 and Trp161 together coordinate theobromine. Asn178 provides a ligand contact to Mg(2+). Ser237 contacts theobromine. Positions 260, 262, and 263 each coordinate Mg(2+). Position 368 (Tyr368) interacts with theobromine.

It belongs to the methyltransferase superfamily. Type-7 methyltransferase family. It depends on Mg(2+) as a cofactor. In terms of tissue distribution, highly expressed in developing endosperm and immature fruits (grains). Detected in young leaves and flower buds, but not in mature fruits.

The catalysed reaction is theobromine + S-adenosyl-L-methionine = caffeine + S-adenosyl-L-homocysteine + H(+). The enzyme catalyses 1,7-dimethylxanthine + S-adenosyl-L-methionine = caffeine + S-adenosyl-L-homocysteine + H(+). It carries out the reaction 7-methylxanthine + S-adenosyl-L-methionine = theobromine + S-adenosyl-L-homocysteine + H(+). It participates in alkaloid biosynthesis. Involved in the biosynthesis of caffeine. Catalyzes the conversion of 7-methylxanthine to caffeine, likely via theobromine as an intermediate. The sequence is that of 3,7-dimethylxanthine N-methyltransferase 1 from Coffea arabica (Arabian coffee).